Consider the following 144-residue polypeptide: SVVKSEDFSLPAYMDRRDYPLPEVAHVKHLSASQKALKEKEKASWSSLSMDEKVELYRIKFKESFAEMNRGSNEWKTVVGGAMFFIGFTALVIMWQKHYVYGPLPQSFDKEWVAKQTKRMLDMKVNPIQGLASKWDYEKNEWKK.

Residues 1–73 (SVVKSEDFSL…SFAEMNRGSN (73 aa)) are Mitochondrial matrix-facing. K4 is modified (N6-acetyllysine; alternate). K4 carries the post-translational modification N6-succinyllysine; alternate. At K28 the chain carries N6-acetyllysine. 2 positions are modified to phosphoserine: S31 and S33. K35 carries the N6-acetyllysine; alternate modification. K35 carries the N6-succinyllysine; alternate modification. The residue at position 42 (K42) is an N6-acetyllysine. The helical transmembrane segment at 74 to 99 (EWKTVVGGAMFFIGFTALVIMWQKHY) threads the bilayer. Over 100-144 (VYGPLPQSFDKEWVAKQTKRMLDMKVNPIQGLASKWDYEKNEWKK) the chain is Mitochondrial intermembrane.

Belongs to the cytochrome c oxidase IV family. In terms of assembly, component of the cytochrome c oxidase (complex IV, CIV), a multisubunit enzyme composed of 14 subunits. The complex is composed of a catalytic core of 3 subunits MT-CO1, MT-CO2 and MT-CO3, encoded in the mitochondrial DNA, and 11 supernumerary subunits COX4I, COX5A, COX5B, COX6A, COX6B, COX6C, COX7A, COX7B, COX7C, COX8 and NDUFA4, which are encoded in the nuclear genome. The complex exists as a monomer or a dimer and forms supercomplexes (SCs) in the inner mitochondrial membrane with NADH-ubiquinone oxidoreductase (complex I, CI) and ubiquinol-cytochrome c oxidoreductase (cytochrome b-c1 complex, complex III, CIII), resulting in different assemblies (supercomplex SCI(1)III(2)IV(1) and megacomplex MCI(2)III(2)IV(2)). Interacts with PHB2; the interaction decreases in absence of SPHK2. Interacts with AFG1L. Interacts with ABCB7; this interaction allows the regulation of cellular iron homeostasis and cellular reactive oxygen species (ROS) levels in cardiomyocytes. Interacts with FLVCR2; this interaction occurs in the absence of heme and is disrupted upon heme binding. Interacts with IRGC.

It localises to the mitochondrion inner membrane. Its pathway is energy metabolism; oxidative phosphorylation. Component of the cytochrome c oxidase, the last enzyme in the mitochondrial electron transport chain which drives oxidative phosphorylation. The respiratory chain contains 3 multisubunit complexes succinate dehydrogenase (complex II, CII), ubiquinol-cytochrome c oxidoreductase (cytochrome b-c1 complex, complex III, CIII) and cytochrome c oxidase (complex IV, CIV), that cooperate to transfer electrons derived from NADH and succinate to molecular oxygen, creating an electrochemical gradient over the inner membrane that drives transmembrane transport and the ATP synthase. Cytochrome c oxidase is the component of the respiratory chain that catalyzes the reduction of oxygen to water. Electrons originating from reduced cytochrome c in the intermembrane space (IMS) are transferred via the dinuclear copper A center (CU(A)) of subunit 2 and heme A of subunit 1 to the active site in subunit 1, a binuclear center (BNC) formed by heme A3 and copper B (CU(B)). The BNC reduces molecular oxygen to 2 water molecules using 4 electrons from cytochrome c in the IMS and 4 protons from the mitochondrial matrix. In Gorilla gorilla gorilla (Western lowland gorilla), this protein is Cytochrome c oxidase subunit 4 isoform 1, mitochondrial (COX4I1).